The sequence spans 243 residues: Protein GIGAS CELL1 (243 aa).

Interacts with APC/C activators such as FZR1, FZR2, FZR3, CDC20.1 and CDC20.5. Phosphorylated by CDKA-1 in complex with CYCA1-2. In terms of tissue distribution, expressed in rapidly dividing tissues such as shoot apical meristem and young leaves. Associated with cell division but also with specific cell types.

Its function is as follows. Negative regulator of the anaphase-promoting complex/cyclosome (APC/C) ubiquitin ligase required for proper mitotic and meiotic progression and cell fate determination. Involved in entry into both meiosis I and meiosis II. Prevents endomitosis by preferentially inhibiting APC/C(CDC20). Required for megagametophyte and endosperm development. Triggers mitotic cyclins (e.g. CYCB1-1 and CYCB1-2) accumulation. Confers immunity to bacterial pathogens (e.g. Pseudomonas syringae pv. tomato DC3000), which is associated with increased expression of disease resistance (R) genes. GIG1 and PANS1 are part of a network linking centromere cohesion and cell cycle progression through control of APC/C activity. In Arabidopsis thaliana (Mouse-ear cress), this protein is Protein GIGAS CELL1 (GIG1).